The primary structure comprises 2364 residues: Actin-binding protein F (2364 aa).

Positions 138-157 (THQTSPTTETTTTPSSSSSS) are enriched in low complexity. 4 disordered regions span residues 138 to 168 (THQT…STLD), 1087 to 1111 (QASK…EKRR), 1412 to 1435 (NNNS…RAPM), and 1929 to 2088 (KLIS…SEFN). The segment covering 1092–1111 (NESEVKDEKSMRNRQVEKRR) has biased composition (basic and acidic residues). Composition is skewed to low complexity over residues 1412–1428 (NNNS…NSFG) and 1932–1960 (SSST…TTTD). Residues 1960–2017 (DSSKDKKKLEKEEKQREKERKQKEKEDKKREKEELKKKEKEEKKKKEEEKKLKKKSGS) adopt a coiled-coil conformation. A compositionally biased stretch (basic and acidic residues) spans 1961 to 2010 (SSKDKKKLEKEEKQREKERKQKEKEDKKREKEELKKKEKEEKKKKEEEKK). A compositionally biased stretch (low complexity) spans 2027 to 2047 (ATPTTTTTTEATTTTTTTTAT). The span at 2052–2070 (IKPEKIASDDEHDDHHHDE) shows a compositional bias: basic and acidic residues. Residues 2071-2081 (HDEEDDDDEPL) are compositionally biased toward acidic residues. Residues 2129-2173 (VQRWNSLFKDLRNKVDQVSNKDSVEIDYEKEIDRERRQNKMASNE) are a coiled coil.

Interacts with actin.

It localises to the nucleus. It is found in the cytoplasm. Its subcellular location is the cytoskeleton. This is Actin-binding protein F (abpF) from Dictyostelium discoideum (Social amoeba).